The primary structure comprises 229 residues: NAD(P)H-hydrate epimerase (229 aa).

The 208-residue stretch at 10 to 217 folds into the YjeF N-terminal domain; that stretch reads AINVDQELFN…ALQRKYDLNL (208 aa). 60-64 provides a ligand contact to (6S)-NADPHX; the sequence is NNGGD. K(+) is bound by residues Asn-61 and Asp-125. Residues 129 to 135 and Asp-158 each bind (6S)-NADPHX; that span reads GFSFKPP. Residue Ser-161 coordinates K(+).

Belongs to the NnrE/AIBP family. K(+) is required as a cofactor.

It catalyses the reaction (6R)-NADHX = (6S)-NADHX. The catalysed reaction is (6R)-NADPHX = (6S)-NADPHX. Its function is as follows. Catalyzes the epimerization of the S- and R-forms of NAD(P)HX, a damaged form of NAD(P)H that is a result of enzymatic or heat-dependent hydration. This is a prerequisite for the S-specific NAD(P)H-hydrate dehydratase to allow the repair of both epimers of NAD(P)HX. This chain is NAD(P)H-hydrate epimerase, found in Drosophila ananassae (Fruit fly).